The following is a 252-amino-acid chain: Demethylmenaquinone methyltransferase (252 aa).

Residues threonine 64, aspartate 85, and 112–113 (NA) each bind S-adenosyl-L-methionine.

Belongs to the class I-like SAM-binding methyltransferase superfamily. MenG/UbiE family.

The enzyme catalyses a 2-demethylmenaquinol + S-adenosyl-L-methionine = a menaquinol + S-adenosyl-L-homocysteine + H(+). It participates in quinol/quinone metabolism; menaquinone biosynthesis; menaquinol from 1,4-dihydroxy-2-naphthoate: step 2/2. Its function is as follows. Methyltransferase required for the conversion of demethylmenaquinol (DMKH2) to menaquinol (MKH2). This is Demethylmenaquinone methyltransferase from Lactococcus lactis subsp. lactis (strain IL1403) (Streptococcus lactis).